The sequence spans 341 residues: S-adenosylmethionine:tRNA ribosyltransferase-isomerase (341 aa).

This sequence belongs to the QueA family. As to quaternary structure, monomer.

Its subcellular location is the cytoplasm. It carries out the reaction 7-aminomethyl-7-carbaguanosine(34) in tRNA + S-adenosyl-L-methionine = epoxyqueuosine(34) in tRNA + adenine + L-methionine + 2 H(+). The protein operates within tRNA modification; tRNA-queuosine biosynthesis. Functionally, transfers and isomerizes the ribose moiety from AdoMet to the 7-aminomethyl group of 7-deazaguanine (preQ1-tRNA) to give epoxyqueuosine (oQ-tRNA). This is S-adenosylmethionine:tRNA ribosyltransferase-isomerase from Citrifermentans bemidjiense (strain ATCC BAA-1014 / DSM 16622 / JCM 12645 / Bem) (Geobacter bemidjiensis).